We begin with the raw amino-acid sequence, 467 residues long: Cysteine--tRNA ligase (467 aa).

Position 30 (C30) interacts with Zn(2+). Positions 32–42 (PTVYNYIHIGN) match the 'HIGH' region motif. The Zn(2+) site is built by C210, H235, and E239. Positions 267–271 (KMSKS) match the 'KMSKS' region motif. K270 serves as a coordination point for ATP. A Phosphoserine modification is found at S271.

This sequence belongs to the class-I aminoacyl-tRNA synthetase family. Monomer. Zn(2+) serves as cofactor.

The protein resides in the cytoplasm. It catalyses the reaction tRNA(Cys) + L-cysteine + ATP = L-cysteinyl-tRNA(Cys) + AMP + diphosphate. This Geobacillus thermodenitrificans (strain NG80-2) protein is Cysteine--tRNA ligase.